Consider the following 268-residue polypeptide: Cytolethal distending toxin subunit A (268 aa).

A signal peptide spans 1–19 (MQKIIVFILCCFMTFFLYA). Cysteine 20 carries N-palmitoyl cysteine lipidation. A lipid anchor (S-diacylglycerol cysteine) is attached at cysteine 20. Residues 112-252 (VSDFLTILGP…DNFDQQWFLT (141 aa)) enclose the Ricin B-type lectin domain. A mediates binding to target cells region spans residues 129–140 (WALAQGNWIWGY).

In terms of assembly, heterotrimer of 3 subunits, CdtA, CdtB and CdtC.

The protein localises to the cell outer membrane. CDTs are cytotoxins which induce cell distension, growth arrest in G2/M phase, nucleus swelling, and chromatin fragmentation in HeLa cells. This Campylobacter jejuni subsp. jejuni serotype O:2 (strain ATCC 700819 / NCTC 11168) protein is Cytolethal distending toxin subunit A (cdtA).